The chain runs to 348 residues: Phenylalanine--tRNA ligase alpha subunit (348 aa).

Position 268 (E268) interacts with Mg(2+).

This sequence belongs to the class-II aminoacyl-tRNA synthetase family. Phe-tRNA synthetase alpha subunit type 1 subfamily. In terms of assembly, tetramer of two alpha and two beta subunits. Mg(2+) is required as a cofactor.

It is found in the cytoplasm. It catalyses the reaction tRNA(Phe) + L-phenylalanine + ATP = L-phenylalanyl-tRNA(Phe) + AMP + diphosphate + H(+). This Bordetella bronchiseptica (strain ATCC BAA-588 / NCTC 13252 / RB50) (Alcaligenes bronchisepticus) protein is Phenylalanine--tRNA ligase alpha subunit.